The primary structure comprises 328 residues: tRNA dimethylallyltransferase (328 aa).

ATP is bound at residue 10–17 (GPTASGKT). Residue 12–17 (TASGKT) participates in substrate binding.

Belongs to the IPP transferase family. In terms of assembly, monomer. The cofactor is Mg(2+).

The catalysed reaction is adenosine(37) in tRNA + dimethylallyl diphosphate = N(6)-dimethylallyladenosine(37) in tRNA + diphosphate. Its function is as follows. Catalyzes the transfer of a dimethylallyl group onto the adenine at position 37 in tRNAs that read codons beginning with uridine, leading to the formation of N6-(dimethylallyl)adenosine (i(6)A). This chain is tRNA dimethylallyltransferase, found in Bifidobacterium longum subsp. infantis (strain ATCC 15697 / DSM 20088 / JCM 1222 / NCTC 11817 / S12).